The chain runs to 369 residues: Phenylalanine--tRNA ligase alpha subunit (369 aa).

E269 provides a ligand contact to Mg(2+).

It belongs to the class-II aminoacyl-tRNA synthetase family. Phe-tRNA synthetase alpha subunit type 1 subfamily. Tetramer of two alpha and two beta subunits. The cofactor is Mg(2+).

The protein localises to the cytoplasm. The enzyme catalyses tRNA(Phe) + L-phenylalanine + ATP = L-phenylalanyl-tRNA(Phe) + AMP + diphosphate + H(+). This chain is Phenylalanine--tRNA ligase alpha subunit, found in Brucella canis (strain ATCC 23365 / NCTC 10854 / RM-666).